The chain runs to 353 residues: Cytochrome c biogenesis protein CcsA (353 aa).

8 helical membrane-spanning segments follow: residues 15-35 (FAIL…PNLP), 37-57 (LAAL…TLLG), 68-88 (LSNL…VHLI), 97-117 (LVGV…TMTL), 142-162 (VMML…AFLI), 261-281 (IIGL…VWAN), 288-308 (WSWD…AAYL), and 322-342 (AILA…VNLL).

It belongs to the CcmF/CycK/Ccl1/NrfE/CcsA family. May interact with ccs1.

It localises to the cellular thylakoid membrane. Required during biogenesis of c-type cytochromes (cytochrome c6 and cytochrome f) at the step of heme attachment. This is Cytochrome c biogenesis protein CcsA from Nostoc punctiforme (strain ATCC 29133 / PCC 73102).